We begin with the raw amino-acid sequence, 304 residues long: Iron(III) enterobactin esterase (304 aa).

Residues 1–25 form the signal peptide; the sequence is MRTSLLVAALGLALAAALPGGAPLA. Active-site charge relay system residues include S182, E242, and H283.

This sequence belongs to the esterase D family. Monomer.

The protein resides in the periplasm. It catalyses the reaction Fe(III)-enterobactin + 3 H2O + H(+) = Fe(III)-[N-(2,3-dihydroxybenzoyl)-L-serine] + 2 N-(2,3-dihydroxybenzoyl)-L-serine. It carries out the reaction Fe(III)-enterobactin + H2O = Fe(III)-[N-(2,3-dihydroxybenzoyl)-L-serine]3 + H(+). The catalysed reaction is Fe(III)-[N-(2,3-dihydroxybenzoyl)-L-serine]3 + H2O + H(+) = Fe(III)-[N-(2,3-dihydroxybenzoyl)-L-serine]2 + N-(2,3-dihydroxybenzoyl)-L-serine. The enzyme catalyses Fe(III)-[N-(2,3-dihydroxybenzoyl)-L-serine]2 + H2O + H(+) = Fe(III)-[N-(2,3-dihydroxybenzoyl)-L-serine] + N-(2,3-dihydroxybenzoyl)-L-serine. Catalyzes the hydrolysis of ferric enterobactin (Fe-Ent). Hydrolyzes Fe-Ent into three molecules of 2,3-dihydroxybenzoylserine (DHBS) still complexed with ferric iron. Iron reduction is necessary to obtain complete release of the metal from DHBS. It can hydrolyze salmochelin S4 (diglucosyl-C-Ent) but is not involved in iron acquisition by this siderophore. In Pseudomonas aeruginosa (strain ATCC 15692 / DSM 22644 / CIP 104116 / JCM 14847 / LMG 12228 / 1C / PRS 101 / PAO1), this protein is Iron(III) enterobactin esterase.